We begin with the raw amino-acid sequence, 82 residues long: Turripeptide Gsg9.1 (82 aa).

Positions 1-23 (MMAKLMITVMTVFFLSLQQGADG) are cleaved as a signal peptide. A propeptide spanning residues 24-46 (LFERWRKNQMAASRIMGNLITAR) is cleaved from the precursor. A 4-hydroxyproline mark is found at P49 and P50. 3 cysteine pairs are disulfide-bonded: C53–C68, C58–C72, and C64–C79. A 4-carboxyglutamate mark is found at E60 and E63.

This sequence belongs to the Pg turripeptide superfamily. In terms of tissue distribution, expressed by the venom duct.

Its subcellular location is the secreted. The protein is Turripeptide Gsg9.1 of Gemmula sogodensis (Gem-turris).